A 445-amino-acid chain; its full sequence is CBL-interacting serine/threonine-protein kinase 5 (445 aa).

The Protein kinase domain occupies 12–267; it reads YEMGRLLGKG…IPAIMRTPWL (256 aa). Residues 18–26 and K41 each bind ATP; that span reads LGKGTFAKV. D135 functions as the Proton acceptor in the catalytic mechanism. The tract at residues 153–182 is activation loop; that stretch reads DFGLSALPEQILQDGLLHTQCGTPAYVAPE. S157 is modified (phosphoserine). T171 carries the phosphothreonine modification. The region spanning 307–332 is the NAF domain; sequence ISPKFFNAFEFISSMSSGFDLSSLFE. Residues 336 to 366 are PPI; the sequence is KVQSVFTSRSSATEVMEKIETVTKEMNMKVK.

It belongs to the protein kinase superfamily. CAMK Ser/Thr protein kinase family. SNF1 subfamily. Mn(2+) is required as a cofactor.

It catalyses the reaction L-seryl-[protein] + ATP = O-phospho-L-seryl-[protein] + ADP + H(+). The enzyme catalyses L-threonyl-[protein] + ATP = O-phospho-L-threonyl-[protein] + ADP + H(+). CIPK serine-threonine protein kinases interact with CBL proteins. Binding of a CBL protein to the regulatory NAF domain of CIPK protein lead to the activation of the kinase in a calcium-dependent manner. The chain is CBL-interacting serine/threonine-protein kinase 5 (CIPK5) from Arabidopsis thaliana (Mouse-ear cress).